Consider the following 333-residue polypeptide: uncharacterized protein (333 aa).

This is an uncharacterized protein from Escherichia coli (Bacteriophage T4).